The following is a 411-amino-acid chain: Phosphopentomutase (411 aa).

Positions 14, 306, 311, 347, 348, and 359 each coordinate Mn(2+).

The protein belongs to the phosphopentomutase family. Mn(2+) serves as cofactor.

Its subcellular location is the cytoplasm. The catalysed reaction is 2-deoxy-alpha-D-ribose 1-phosphate = 2-deoxy-D-ribose 5-phosphate. It catalyses the reaction alpha-D-ribose 1-phosphate = D-ribose 5-phosphate. It participates in carbohydrate degradation; 2-deoxy-D-ribose 1-phosphate degradation; D-glyceraldehyde 3-phosphate and acetaldehyde from 2-deoxy-alpha-D-ribose 1-phosphate: step 1/2. Functionally, isomerase that catalyzes the conversion of deoxy-ribose 1-phosphate (dRib-1-P) and ribose 1-phosphate (Rib-1-P) to deoxy-ribose 5-phosphate (dRib-5-P) and ribose 5-phosphate (Rib-5-P), respectively. The protein is Phosphopentomutase of Lactococcus lactis subsp. lactis (strain IL1403) (Streptococcus lactis).